The following is a 32-amino-acid chain: Photosystem II reaction center protein T (32 aa).

Residues 3–23 (ALVYTFLLIGTLMVIFFAVFF) traverse the membrane as a helical segment.

This sequence belongs to the PsbT family. PSII is composed of 1 copy each of membrane proteins PsbA, PsbB, PsbC, PsbD, PsbE, PsbF, PsbH, PsbI, PsbJ, PsbK, PsbL, PsbM, PsbT, PsbX, PsbY, PsbZ, Psb30/Ycf12, at least 3 peripheral proteins of the oxygen-evolving complex and a large number of cofactors. It forms dimeric complexes.

The protein resides in the plastid. The protein localises to the chloroplast thylakoid membrane. Functionally, found at the monomer-monomer interface of the photosystem II (PS II) dimer, plays a role in assembly and dimerization of PSII. PSII is a light-driven water plastoquinone oxidoreductase, using light energy to abstract electrons from H(2)O, generating a proton gradient subsequently used for ATP formation. In Trieres chinensis (Marine centric diatom), this protein is Photosystem II reaction center protein T.